We begin with the raw amino-acid sequence, 215 residues long: Ras-related protein SEC4 (215 aa).

Glycine 27–serine 34 contacts GTP. The Effector region signature appears at phenylalanine 49–phenylalanine 57. GTP is bound by residues aspartate 75–glutamine 79 and asparagine 133–aspartate 136. Phosphoserine is present on residues serine 201 and serine 204. 2 S-geranylgeranyl cysteine lipidation sites follow: cysteine 214 and cysteine 215.

The protein belongs to the small GTPase superfamily. Rab family. As to quaternary structure, interacts with the guanyl-nucleotide exchange factor SEC2. Interacts with SRO7, YIF1, YIP3, YIP4 and YIP5.

The protein localises to the cytoplasmic vesicle. The protein resides in the secretory vesicle membrane. Its subcellular location is the cell membrane. It localises to the cytoplasm. Functionally, involved in exocytosis. Maybe by regulating the binding and fusion of secretory vesicles with the cell surface. The GTP-bound form of SEC4 may interact with an effector, thereby stimulating its activity and leading to exocytotic fusion. SEC4 may be an upstream activator of the 19.5S SEC8/SEC15 particle. SEC4 probably interacts directly with SEC8; it could serve as the attachment site for the SEC8/SEC15 particle. This Saccharomyces cerevisiae (strain ATCC 204508 / S288c) (Baker's yeast) protein is Ras-related protein SEC4 (SEC4).